The primary structure comprises 387 residues: S-adenosylmethionine synthase (387 aa).

His16 is an ATP binding site. Mg(2+) is bound at residue Asp18. Glu44 lines the K(+) pocket. L-methionine-binding residues include Glu57 and Gln100. Positions 100–110 are flexible loop; that stretch reads QSPDIAQGVDR. Residues 167 to 169, 232 to 233, Asp241, 247 to 248, Ala264, and Lys268 each bind ATP; these read DAK, RF, and RK. Asp241 provides a ligand contact to L-methionine. Lys272 lines the L-methionine pocket.

Belongs to the AdoMet synthase family. Homotetramer; dimer of dimers. It depends on Mg(2+) as a cofactor. The cofactor is K(+).

It localises to the cytoplasm. The enzyme catalyses L-methionine + ATP + H2O = S-adenosyl-L-methionine + phosphate + diphosphate. The protein operates within amino-acid biosynthesis; S-adenosyl-L-methionine biosynthesis; S-adenosyl-L-methionine from L-methionine: step 1/1. In terms of biological role, catalyzes the formation of S-adenosylmethionine (AdoMet) from methionine and ATP. The overall synthetic reaction is composed of two sequential steps, AdoMet formation and the subsequent tripolyphosphate hydrolysis which occurs prior to release of AdoMet from the enzyme. This is S-adenosylmethionine synthase from Cupriavidus metallidurans (strain ATCC 43123 / DSM 2839 / NBRC 102507 / CH34) (Ralstonia metallidurans).